We begin with the raw amino-acid sequence, 615 residues long: Elongation factor 4 (615 aa).

In terms of domain architecture, tr-type G spans 14–196; sequence AMIRNFCIIA…EIVRQVPAPV (183 aa). Residues 26–31 and 143–146 contribute to the GTP site; these read DHGKST and NKID.

The protein belongs to the TRAFAC class translation factor GTPase superfamily. Classic translation factor GTPase family. LepA subfamily.

It localises to the cell membrane. It catalyses the reaction GTP + H2O = GDP + phosphate + H(+). Its function is as follows. Required for accurate and efficient protein synthesis under certain stress conditions. May act as a fidelity factor of the translation reaction, by catalyzing a one-codon backward translocation of tRNAs on improperly translocated ribosomes. Back-translocation proceeds from a post-translocation (POST) complex to a pre-translocation (PRE) complex, thus giving elongation factor G a second chance to translocate the tRNAs correctly. Binds to ribosomes in a GTP-dependent manner. This is Elongation factor 4 from Frankia alni (strain DSM 45986 / CECT 9034 / ACN14a).